Reading from the N-terminus, the 75-residue chain is Small ribosomal subunit protein bS21B (75 aa).

The span at 33–52 (RRSYEKPSERRAREKAEAVR) shows a compositional bias: basic and acidic residues. The disordered stretch occupies residues 33–75 (RRSYEKPSERRAREKAEAVRRARKLARKQAQREGLLPGKKRAA).

This sequence belongs to the bacterial ribosomal protein bS21 family.

This is Small ribosomal subunit protein bS21B from Chelativorans sp. (strain BNC1).